Consider the following 264-residue polypeptide: Indole-3-glycerol phosphate synthase (264 aa).

This sequence belongs to the TrpC family.

The catalysed reaction is 1-(2-carboxyphenylamino)-1-deoxy-D-ribulose 5-phosphate + H(+) = (1S,2R)-1-C-(indol-3-yl)glycerol 3-phosphate + CO2 + H2O. It participates in amino-acid biosynthesis; L-tryptophan biosynthesis; L-tryptophan from chorismate: step 4/5. The polypeptide is Indole-3-glycerol phosphate synthase (Albidiferax ferrireducens (strain ATCC BAA-621 / DSM 15236 / T118) (Rhodoferax ferrireducens)).